The chain runs to 251 residues: 4-hydroxy-tetrahydrodipicolinate reductase (251 aa).

NAD(+) is bound at residue 8–13 (GALGRM). NADP(+) is bound at residue Arg-36. Residues 89–91 (GTT) and 113–116 (TTNF) each bind NAD(+). His-145 (proton donor/acceptor) is an active-site residue. His-146 lines the (S)-2,3,4,5-tetrahydrodipicolinate pocket. Lys-149 functions as the Proton donor in the catalytic mechanism. A (S)-2,3,4,5-tetrahydrodipicolinate-binding site is contributed by 155–156 (GT).

The protein belongs to the DapB family.

It localises to the cytoplasm. It carries out the reaction (S)-2,3,4,5-tetrahydrodipicolinate + NAD(+) + H2O = (2S,4S)-4-hydroxy-2,3,4,5-tetrahydrodipicolinate + NADH + H(+). The catalysed reaction is (S)-2,3,4,5-tetrahydrodipicolinate + NADP(+) + H2O = (2S,4S)-4-hydroxy-2,3,4,5-tetrahydrodipicolinate + NADPH + H(+). Its pathway is amino-acid biosynthesis; L-lysine biosynthesis via DAP pathway; (S)-tetrahydrodipicolinate from L-aspartate: step 4/4. Catalyzes the conversion of 4-hydroxy-tetrahydrodipicolinate (HTPA) to tetrahydrodipicolinate. The sequence is that of 4-hydroxy-tetrahydrodipicolinate reductase from Methanocorpusculum labreanum (strain ATCC 43576 / DSM 4855 / Z).